The following is a 282-amino-acid chain: Bifunctional protein FolD (282 aa).

Residues 162 to 164 (GRS), S187, and V228 contribute to the NADP(+) site.

It belongs to the tetrahydrofolate dehydrogenase/cyclohydrolase family. In terms of assembly, homodimer.

It catalyses the reaction (6R)-5,10-methylene-5,6,7,8-tetrahydrofolate + NADP(+) = (6R)-5,10-methenyltetrahydrofolate + NADPH. It carries out the reaction (6R)-5,10-methenyltetrahydrofolate + H2O = (6R)-10-formyltetrahydrofolate + H(+). It participates in one-carbon metabolism; tetrahydrofolate interconversion. Functionally, catalyzes the oxidation of 5,10-methylenetetrahydrofolate to 5,10-methenyltetrahydrofolate and then the hydrolysis of 5,10-methenyltetrahydrofolate to 10-formyltetrahydrofolate. In Thermus thermophilus (strain ATCC 27634 / DSM 579 / HB8), this protein is Bifunctional protein FolD.